Here is a 144-residue protein sequence, read N- to C-terminus: Large ribosomal subunit protein uL15 (144 aa).

The disordered stretch occupies residues M1 to Q54. Positions R21–G31 are enriched in gly residues.

Belongs to the universal ribosomal protein uL15 family. In terms of assembly, part of the 50S ribosomal subunit.

Its function is as follows. Binds to the 23S rRNA. This chain is Large ribosomal subunit protein uL15, found in Salmonella arizonae (strain ATCC BAA-731 / CDC346-86 / RSK2980).